The primary structure comprises 96 residues: Copper-sensing transcriptional repressor RicR (96 aa).

Residue Thr-2 is modified to N-acetylthreonine. Positions 38, 63, and 67 each coordinate Cu cation.

The protein belongs to the CsoR family.

The protein localises to the cytoplasm. In terms of biological role, under low copper conditions, represses the expression of lpqS, Rv2963, mymT, socA, socB, mmcO and its own expression. In the presence of copper, RicR dissociates from DNA, leading to the expression of the target genes. Members of the RicR regulon are important for copper resistance during infections and full virulence in a mouse model of infection. This is Copper-sensing transcriptional repressor RicR from Mycobacterium tuberculosis (strain ATCC 25618 / H37Rv).